We begin with the raw amino-acid sequence, 283 residues long: Movement protein (283 aa).

The segment at 233 to 283 (SVKRTKSENTPGKRRVNVDSVSLGLGKGKSVSAKNEDTESVFDDGILDSDS) is disordered. Residues 270–283 (TESVFDDGILDSDS) are compositionally biased toward acidic residues.

It belongs to the tobamovirus movement protein family.

Its subcellular location is the host cytoplasm. The protein resides in the host cytoskeleton. The protein localises to the host cell junction. It is found in the host plasmodesma. Transports viral genome to neighboring plant cells directly through plasmosdesmata, without any budding. The movement protein allows efficient cell to cell propagation, by bypassing the host cell wall barrier. Forms a ribonucleoprotein complex with viral RNA. Binds microtubules and modulates microtubule stability. Can bind double-stranded DNA. The sequence is that of Movement protein (MP) from Crotalaria juncea (Sunn hemp).